Here is a 210-residue protein sequence, read N- to C-terminus: Protein SYM1 (210 aa).

A run of 4 helical transmembrane segments spans residues 22 to 39 (IMTG…QLLF), 68 to 84 (AVVY…DRWY), 112 to 129 (LGFA…MSLL), and 173 to 189 (LLAA…FLSY).

The protein belongs to the peroxisomal membrane protein PXMP2/4 family.

It is found in the mitochondrion inner membrane. Functionally, may be involved in cellular response to stress. Required to maintain mitochondrial DNA (mtDNA) integrity and stability. The sequence is that of Protein SYM1 (SYM1) from Candida glabrata (strain ATCC 2001 / BCRC 20586 / JCM 3761 / NBRC 0622 / NRRL Y-65 / CBS 138) (Yeast).